A 445-amino-acid chain; its full sequence is Phosphoglucosamine mutase 1 (445 aa).

Serine 102 functions as the Phosphoserine intermediate in the catalytic mechanism. Mg(2+)-binding residues include serine 102, aspartate 241, aspartate 243, and aspartate 245. Position 102 is a phosphoserine (serine 102).

The protein belongs to the phosphohexose mutase family. The cofactor is Mg(2+). Post-translationally, activated by phosphorylation.

The catalysed reaction is alpha-D-glucosamine 1-phosphate = D-glucosamine 6-phosphate. Catalyzes the conversion of glucosamine-6-phosphate to glucosamine-1-phosphate. The polypeptide is Phosphoglucosamine mutase 1 (Shewanella amazonensis (strain ATCC BAA-1098 / SB2B)).